The chain runs to 268 residues: Bis(5'-nucleosyl)-tetraphosphatase, symmetrical (268 aa).

This sequence belongs to the Ap4A hydrolase family.

It carries out the reaction P(1),P(4)-bis(5'-adenosyl) tetraphosphate + H2O = 2 ADP + 2 H(+). Hydrolyzes diadenosine 5',5'''-P1,P4-tetraphosphate to yield ADP. The polypeptide is Bis(5'-nucleosyl)-tetraphosphatase, symmetrical (Vibrio parahaemolyticus serotype O3:K6 (strain RIMD 2210633)).